We begin with the raw amino-acid sequence, 664 residues long: Chaperone protein DnaK (664 aa).

T201 carries the post-translational modification Phosphothreonine; by autocatalysis. Positions 574 to 592 (LKEDASTEKIKEASEELSR) are enriched in basic and acidic residues. A disordered region spans residues 574 to 664 (LKEDASTEKI…DVEIVDKPND (91 aa)). Residues 600 to 617 (AMQSQSASAAPSSAANAQ) are compositionally biased toward low complexity. A compositionally biased stretch (polar residues) spans 639-649 (GNSTSASSNNE).

The protein belongs to the heat shock protein 70 family.

Acts as a chaperone. The sequence is that of Chaperone protein DnaK from Chlamydia felis (strain Fe/C-56) (Chlamydophila felis).